A 567-amino-acid chain; its full sequence is Alpha-glucosidase (567 aa).

A signal peptide spans 1–17 (MKAVIVFCLMALSIVDA). Residues Asn-88 and Asn-123 are each glycosylated (N-linked (GlcNAc...) asparagine). Residue Asp-223 is the Nucleophile of the active site. Asn-247 is a glycosylation site (N-linked (GlcNAc...) asparagine). The active-site Proton donor is Glu-286. N-linked (GlcNAc...) asparagine glycosylation is found at Asn-290, Asn-313, Asn-319, Asn-499, and Asn-507.

Monomer. In terms of tissue distribution, expressed specifically in the hypopharyngeal glands of worker bees. Also found in the brain of worker bees (at protein level).

The enzyme catalyses Hydrolysis of terminal, non-reducing (1-&gt;4)-linked alpha-D-glucose residues with release of alpha-D-glucose.. Converts sucrose in nectar to glucose and fructose. The chain is Alpha-glucosidase from Apis mellifera (Honeybee).